Here is a 138-residue protein sequence, read N- to C-terminus: Cysteine desulfuration protein SufE (138 aa).

Catalysis depends on cysteine 51, which acts as the Cysteine persulfide intermediate.

This sequence belongs to the SufE family. In terms of assembly, homodimer. Interacts with SufS.

Its subcellular location is the cytoplasm. The protein operates within cofactor biosynthesis; iron-sulfur cluster biosynthesis. In terms of biological role, participates in cysteine desulfuration mediated by SufS. Cysteine desulfuration mobilizes sulfur from L-cysteine to yield L-alanine and constitutes an essential step in sulfur metabolism for biosynthesis of a variety of sulfur-containing biomolecules. Functions as a sulfur acceptor for SufS, by mediating the direct transfer of the sulfur atom from the S-sulfanylcysteine of SufS, an intermediate product of cysteine desulfuration process. In Shigella flexneri serotype 5b (strain 8401), this protein is Cysteine desulfuration protein SufE.